A 130-amino-acid polypeptide reads, in one-letter code: uncharacterized protein (130 aa).

Residues M1–P100 are disordered. Basic and acidic residues-rich tracts occupy residues Y57–D75 and A91–P100.

This is an uncharacterized protein from Equine herpesvirus 1 (strain Ab4p) (EHV-1).